Here is a 362-residue protein sequence, read N- to C-terminus: N-acylethanolamine-hydrolyzing acid amidase (362 aa).

The signal sequence occupies residues 1 to 33; that stretch reads MGTLATRAACHGAHLALALLLLLSLSGPWLSAV. Residues asparagine 42 and asparagine 112 are each glycosylated (N-linked (GlcNAc...) asparagine). The active-site Nucleophile is the cysteine 131. Residues asparagine 314 and asparagine 338 are each glycosylated (N-linked (GlcNAc...) asparagine).

The protein belongs to the acid ceramidase family. Heterodimer of an alpha and a beta subunit, produced by autocatalytic cleavage. In terms of processing, N-glycosylated. Tunicamycin treatment causes a reduction in specific activity against N-palmitoylethanolamine. Post-translationally, autoproteolytic cleavage at pH 4.5 gives rise to the alpha and beta subunit. Cleavage gives rise to a conformation change that activates the enzyme. The same catalytic Cys residue mediates the autoproteolytic cleavage and subsequent hydrolysis of lipid substrates.

It localises to the lysosome. Its subcellular location is the membrane. The enzyme catalyses N-hexadecanoylethanolamine + H2O = ethanolamine + hexadecanoate. It catalyses the reaction an N-(long-chain fatty acyl)ethanolamine + H2O = a long-chain fatty acid + ethanolamine. It carries out the reaction N-dodecanoylethanolamine + H2O = dodecanoate + ethanolamine. The catalysed reaction is N-tetradecanoylethanolamine + H2O = tetradecanoate + ethanolamine. The enzyme catalyses an N-acylsphing-4-enine + H2O = sphing-4-enine + a fatty acid. It catalyses the reaction N-hexadecanoylsphing-4-enine + H2O = sphing-4-enine + hexadecanoate. It carries out the reaction N-dodecanoylsphing-4-enine + H2O = dodecanoate + sphing-4-enine. It functions in the pathway lipid metabolism; fatty acid metabolism. In terms of biological role, degrades bioactive fatty acid amides to their corresponding acids, with the following preference: N-palmitoylethanolamine &gt; N-myristoylethanolamine &gt; N-stearoylethanolamine &gt; N-oleoylethanolamine &gt; N-linoleoylethanolamine &gt; N-arachidonoylethanolamine. The chain is N-acylethanolamine-hydrolyzing acid amidase from Mus musculus (Mouse).